The following is a 314-amino-acid chain: Epithelial-stromal interaction protein 1 (314 aa).

Disordered stretches follow at residues 1–72 (MYPR…PNET), 200–219 (NRSA…WKLP), 225–267 (PSRA…HQEE), and 292–314 (SQPG…GWGI). Positions 43-58 (AEPKGPKLERQGHGDQ) are enriched in basic and acidic residues. Positions 71–180 (ETRRQKIQRI…QEDIRRATLR (110 aa)) form a coiled coil. The span at 232-267 (AHKDSPQKEDNQKLQKTRDGHQKNKLLETKGQHQEE) shows a compositional bias: basic and acidic residues. A compositionally biased stretch (polar residues) spans 305–314 (NMNSTDGWGI).

Its function is as follows. Plays a role in M1 macrophage polarization and is required for the proper regulation of gene expression during M1 versus M2 macrophage differentiation. Might play a role in RELA/p65 and STAT1 phosphorylation and nuclear localization upon activation of macrophages. This is Epithelial-stromal interaction protein 1 (Epsti1) from Rattus norvegicus (Rat).